The chain runs to 2021 residues: HEAT repeat-containing protein 5A (2021 aa).

HEAT repeat units lie at residues 795–836 (SQRP…HLAS) and 1059–1096 (VNLS…REAA). Disordered regions lie at residues 1503–1528 (EGNG…LPAD) and 1989–2012 (RGNQ…HGSP). Residues 1512–1522 (VTPTSMGQERG) show a composition bias toward polar residues.

This sequence belongs to the HEATR5 family.

This is HEAT repeat-containing protein 5A (heatr5a) from Xenopus tropicalis (Western clawed frog).